The primary structure comprises 87 residues: Small ribosomal subunit protein bS20 (87 aa).

Residues 1–21 (MANHKSAEKRARQTIKKTERN) are disordered.

This sequence belongs to the bacterial ribosomal protein bS20 family.

Binds directly to 16S ribosomal RNA. This chain is Small ribosomal subunit protein bS20, found in Campylobacter jejuni subsp. jejuni serotype O:23/36 (strain 81-176).